The primary structure comprises 613 residues: Leucine aminopeptidase 2 (613 aa).

Residues 134–136 and 265–270 contribute to the a peptide site; these read QAQ and PYGGME. His-294 lines the Zn(2+) pocket. Glu-295 functions as the Proton acceptor in the catalytic mechanism. 2 residues coordinate Zn(2+): His-298 and Glu-317. The active-site Proton donor is Tyr-382.

It belongs to the peptidase M1 family. Zn(2+) is required as a cofactor.

It localises to the cytoplasm. It is found in the nucleus. The enzyme catalyses an epoxide + H2O = an ethanediol. In terms of biological role, aminopeptidase that preferentially cleaves di- and tripeptides. Also has low epoxide hydrolase activity (in vitro). Can hydrolyze the epoxide leukotriene LTA(4) but it forms preferentially 5,6-dihydroxy-7,9,11,14-eicosatetraenoic acid rather than the cytokine leukotriene B(4) as the product compared to the homologous mammalian enzyme (in vitro). The sequence is that of Leucine aminopeptidase 2 from Pyricularia oryzae (strain 70-15 / ATCC MYA-4617 / FGSC 8958) (Rice blast fungus).